We begin with the raw amino-acid sequence, 181 residues long: TATA-box-binding protein (181 aa).

2 consecutive repeat copies span residues 7 to 83 (IVNV…IKEL) and 98 to 173 (VQNM…LTTL).

This sequence belongs to the TBP family.

Functionally, general factor that plays a role in the activation of archaeal genes transcribed by RNA polymerase. Binds specifically to the TATA box promoter element which lies close to the position of transcription initiation. The sequence is that of TATA-box-binding protein from Methanococcus maripaludis (strain C7 / ATCC BAA-1331).